A 492-amino-acid chain; its full sequence is Pyrin and HIN domain-containing protein 1 (492 aa).

Residues 1–88 form the Pyrin domain; that stretch reads MANNYKKIVL…AETLKREKLK (88 aa). 2 disordered regions span residues 106 to 199 and 400 to 492; these read KTKQ…KPLA and KNTN…PAVP. The segment covering 142-159 has biased composition (basic and acidic residues); that stretch reads PSEEETGTKRSKMSKEQT. Residues 160–173 are compositionally biased toward polar residues; that stretch reads RPSCSAGASTSTAM. Low complexity predominate over residues 181–194; it reads TSSSAPPNTSSTES. Residues 199–399 form the HIN-200 domain; the sequence is ANRHATASKN…SEMHSFIQIQ (201 aa). Composition is skewed to polar residues over residues 416–432 and 460–492; these read QEQS…TTLP and GAQS…PAVP.

The protein belongs to the HIN-200 family. Interacts with MDM2. In terms of tissue distribution, expressed in spleen, lymph node and peripheral blood leukocytes, and at lower levels in thymus, bone marrow and fetal liver. Down-regulated in breast tumors.

The protein localises to the nucleus. It is found in the nucleoplasm. Its subcellular location is the nucleus speckle. Functionally, major mediator of the tumor suppressor activity of IFN in breast cancer cells. Promotes ubiquitination and subsequent degradation of MDM2, which leads to p53/TP53 stabilization. Promotes ubiquitination and subsequent degradation of HDAC1, which in turn enhances maspin expression, and impairs invasive activity of cancer cells. The chain is Pyrin and HIN domain-containing protein 1 (PYHIN1) from Homo sapiens (Human).